Consider the following 125-residue polypeptide: Mesotocin-neurophysin MT (125 aa).

Residues 1 to 19 form the signal peptide; that stretch reads MSYTALAVTFFGWLALSSA. The cysteines at positions 20 and 25 are disulfide-linked. Residue Gly28 is modified to Glycine amide. Intrachain disulfides connect Cys42–Cys86, Cys45–Cys59, Cys53–Cys76, Cys60–Cys66, Cys93–Cys106, Cys100–Cys118, and Cys107–Cys112.

It belongs to the vasopressin/oxytocin family. As to expression, mesotocin is produced by magnocellular preoptic neurons in the hypothalamus in amphibians, reptiles and birds.

The protein localises to the secreted. Its function is as follows. Mesotocin is a diuretic hormone. This Bufo japonicus (Japanese common toad) protein is Mesotocin-neurophysin MT.